The chain runs to 310 residues: tRNA uridine(34) hydroxylase (310 aa).

Positions Ser-124–Ser-218 constitute a Rhodanese domain. The active-site Cysteine persulfide intermediate is Cys-178.

Belongs to the TrhO family.

It carries out the reaction uridine(34) in tRNA + AH2 + O2 = 5-hydroxyuridine(34) in tRNA + A + H2O. In terms of biological role, catalyzes oxygen-dependent 5-hydroxyuridine (ho5U) modification at position 34 in tRNAs. The chain is tRNA uridine(34) hydroxylase from Pseudomonas entomophila (strain L48).